The following is a 65-amino-acid chain: Toxin Cbi1 (65 aa).

An LCN-type CS-alpha/beta domain is found at K1–R64. 4 cysteine pairs are disulfide-bonded: C11/C63, C15/C37, C22/C44, and C26/C46.

It belongs to the long (4 C-C) scorpion toxin superfamily. Sodium channel inhibitor family. Beta subfamily. In terms of tissue distribution, expressed by the venom gland.

It localises to the secreted. Functionally, beta toxins bind voltage-independently at site-4 of sodium channels (Nav) and shift the voltage of activation toward more negative potentials thereby affecting sodium channel activation and promoting spontaneous and repetitive firing. The sequence is that of Toxin Cbi1 from Centruroides bicolor (Scorpion).